The chain runs to 708 residues: Polyribonucleotide nucleotidyltransferase (708 aa).

Positions 487 and 493 each coordinate Mg(2+). The region spanning 554–613 (PRIHTMKISADKIKDVIGKGGAVIRALTEETGTTIEIEDDGTIKIAATEGAAAKEAIRRI) is the KH domain. The region spanning 623–691 (GVIYTGKVAR…RQGRVRLSMK (69 aa)) is the S1 motif domain.

The protein belongs to the polyribonucleotide nucleotidyltransferase family. In terms of assembly, component of the RNA degradosome, which is a multiprotein complex involved in RNA processing and mRNA degradation. Requires Mg(2+) as cofactor.

The protein resides in the cytoplasm. It carries out the reaction RNA(n+1) + phosphate = RNA(n) + a ribonucleoside 5'-diphosphate. In terms of biological role, involved in mRNA degradation. Catalyzes the phosphorolysis of single-stranded polyribonucleotides processively in the 3'- to 5'-direction. This is Polyribonucleotide nucleotidyltransferase from Vibrio vulnificus (strain CMCP6).